A 295-amino-acid polypeptide reads, in one-letter code: Pyridoxal 5'-phosphate synthase subunit PdxS (295 aa).

D-ribose 5-phosphate is bound at residue aspartate 25. Catalysis depends on lysine 82, which acts as the Schiff-base intermediate with D-ribose 5-phosphate. D-ribose 5-phosphate is bound at residue glycine 154. Arginine 166 serves as a coordination point for D-glyceraldehyde 3-phosphate. Residues glycine 215 and glycine 236–serine 237 contribute to the D-ribose 5-phosphate site.

Belongs to the PdxS/SNZ family. In terms of assembly, in the presence of PdxT, forms a dodecamer of heterodimers.

It catalyses the reaction aldehydo-D-ribose 5-phosphate + D-glyceraldehyde 3-phosphate + L-glutamine = pyridoxal 5'-phosphate + L-glutamate + phosphate + 3 H2O + H(+). Its pathway is cofactor biosynthesis; pyridoxal 5'-phosphate biosynthesis. Its function is as follows. Catalyzes the formation of pyridoxal 5'-phosphate from ribose 5-phosphate (RBP), glyceraldehyde 3-phosphate (G3P) and ammonia. The ammonia is provided by the PdxT subunit. Can also use ribulose 5-phosphate and dihydroxyacetone phosphate as substrates, resulting from enzyme-catalyzed isomerization of RBP and G3P, respectively. The polypeptide is Pyridoxal 5'-phosphate synthase subunit PdxS (Bacillus cereus (strain G9842)).